Reading from the N-terminus, the 405-residue chain is Probable tRNA sulfurtransferase (405 aa).

In terms of domain architecture, THUMP spans 60–165 (DKIDQRLKLV…QDAIYISNQL (106 aa)). ATP is bound by residues 183–184 (ML), 208–209 (HF), arginine 265, glycine 287, and glutamine 296.

Belongs to the ThiI family.

The protein resides in the cytoplasm. The catalysed reaction is [ThiI sulfur-carrier protein]-S-sulfanyl-L-cysteine + a uridine in tRNA + 2 reduced [2Fe-2S]-[ferredoxin] + ATP + H(+) = [ThiI sulfur-carrier protein]-L-cysteine + a 4-thiouridine in tRNA + 2 oxidized [2Fe-2S]-[ferredoxin] + AMP + diphosphate. It catalyses the reaction [ThiS sulfur-carrier protein]-C-terminal Gly-Gly-AMP + S-sulfanyl-L-cysteinyl-[cysteine desulfurase] + AH2 = [ThiS sulfur-carrier protein]-C-terminal-Gly-aminoethanethioate + L-cysteinyl-[cysteine desulfurase] + A + AMP + 2 H(+). It functions in the pathway cofactor biosynthesis; thiamine diphosphate biosynthesis. Catalyzes the ATP-dependent transfer of a sulfur to tRNA to produce 4-thiouridine in position 8 of tRNAs, which functions as a near-UV photosensor. Also catalyzes the transfer of sulfur to the sulfur carrier protein ThiS, forming ThiS-thiocarboxylate. This is a step in the synthesis of thiazole, in the thiamine biosynthesis pathway. The sulfur is donated as persulfide by IscS. The chain is Probable tRNA sulfurtransferase from Lactobacillus gasseri (strain ATCC 33323 / DSM 20243 / BCRC 14619 / CIP 102991 / JCM 1131 / KCTC 3163 / NCIMB 11718 / NCTC 13722 / AM63).